Consider the following 312-residue polypeptide: Protein phosphatase 2A catalytic subunit B (312 aa).

Residues Asp55, His57, Asp83, and Asn115 each coordinate Mn(2+). His116 serves as the catalytic Proton donor. The Mn(2+) site is built by His165 and His240.

The protein belongs to the PPP phosphatase family. PP-2A subfamily. In terms of assembly, component of the Sca1 complex composed of at least gefA, gefH, scaA, phr, and the protein phosphatase 2A subunits pppA and pho2B. Mn(2+) serves as cofactor.

It localises to the cell membrane. It carries out the reaction O-phospho-L-seryl-[protein] + H2O = L-seryl-[protein] + phosphate. The enzyme catalyses O-phospho-L-threonyl-[protein] + H2O = L-threonyl-[protein] + phosphate. Component of the Sca1 complex, a regulator of cell motility, chemotaxis and signal relay. The Sca1 complex is recruited to the plasma membrane in a chemoattractant- and F-actin-dependent manner and is enriched at the leading edge of chemotaxing cells where it regulates F-actin dynamics and signal relay by controlling the activation of rasC and the downstream target of rapamycin complex 2 (TORC2)-Akt/protein kinase B (PKB) pathway. This is Protein phosphatase 2A catalytic subunit B from Dictyostelium discoideum (Social amoeba).